A 736-amino-acid chain; its full sequence is 3',5'-cyclic-AMP phosphodiesterase 4B (736 aa).

3 disordered regions span residues 51–78 (QLPP…TTLP), 189–209 (LHGT…SRVN), and 282–301 (KQND…KKKK). Serine 290 is subject to Phosphoserine. A PDEase domain is found at 330–659 (VNTENEDHLA…NWYQSMIPQS (330 aa)). Histidine 406 serves as the catalytic Proton donor. Residue histidine 406 coordinates 3',5'-cyclic AMP. The AMP site is built by histidine 406 and histidine 410. Zn(2+)-binding residues include histidine 410, histidine 446, aspartate 447, and aspartate 564. Residues aspartate 447, aspartate 564, glutamine 615, and phenylalanine 618 each contribute to the AMP site. A Mg(2+)-binding site is contributed by aspartate 447. Aspartate 447 contributes to the Mn(2+) binding site. 3',5'-cyclic AMP-binding residues include glutamine 615 and phenylalanine 618. Residues serine 659 and serine 661 each carry the phosphoserine modification. The disordered stretch occupies residues 685 to 736 (DEEDSEGPEKEGEGHSYFSSTKTLCVIDPENRDSLGETDIDIATEDKSPVDT).

This sequence belongs to the cyclic nucleotide phosphodiesterase family. PDE4 subfamily. As to quaternary structure, interacts with DISC1. Zn(2+) is required as a cofactor. The cofactor is Mg(2+). It depends on Mn(2+) as a cofactor. In terms of tissue distribution, expressed in brain, heart, lung and skeletal muscle. Expressed in white blood cells. As to expression, brain-specific isoform.

It localises to the cytoplasm. The protein localises to the cell membrane. It catalyses the reaction 3',5'-cyclic AMP + H2O = AMP + H(+). The protein operates within purine metabolism; 3',5'-cyclic AMP degradation; AMP from 3',5'-cyclic AMP: step 1/1. Its activity is regulated as follows. Inhibited by rolipram. In terms of biological role, hydrolyzes the second messenger cAMP, which is a key regulator of many important physiological processes. May be involved in mediating central nervous system effects of therapeutic agents ranging from antidepressants to antiasthmatic and anti-inflammatory agents. The sequence is that of 3',5'-cyclic-AMP phosphodiesterase 4B from Homo sapiens (Human).